The primary structure comprises 153 residues: Gamma-glutamylaminecyclotransferase (153 aa).

7–10 (YGTL) is a substrate binding site. Catalysis depends on Glu82, which acts as the Proton acceptor. Residues 130–153 (QLPHHDSYDSEGPHGLRYNPRENR) are disordered. The span at 132–153 (PHHDSYDSEGPHGLRYNPRENR) shows a compositional bias: basic and acidic residues.

The protein belongs to the gamma-glutamylcyclotransferase family. As to quaternary structure, monomer.

It carries out the reaction epsilon-(gamma-L-glutamyl)-L-lysine = 5-oxo-L-proline + L-lysine. In terms of biological role, contributes to degradation of proteins cross-linked by transglutaminases by degrading the cross-link between a lysine and a glutamic acid residue. Catalyzes the formation of 5-oxo-L-proline from L-gamma-glutamyl-L-epsilon-lysine. Inactive with L-gamma-glutamyl-alpha-amino acid substrates such as L-gamma-glutamyl-L-alpha-cysteine and L-gamma-glutamyl-L-alpha-alanine. The chain is Gamma-glutamylaminecyclotransferase (GGACT) from Homo sapiens (Human).